A 388-amino-acid chain; its full sequence is 3-ketoacyl-CoA thiolase (388 aa).

The active-site Acyl-thioester intermediate is the cysteine 91. Residues histidine 343 and cysteine 373 each act as proton acceptor in the active site.

It belongs to the thiolase-like superfamily. Thiolase family. Heterotetramer of two alpha chains (FadB) and two beta chains (FadA).

Its subcellular location is the cytoplasm. It catalyses the reaction an acyl-CoA + acetyl-CoA = a 3-oxoacyl-CoA + CoA. Its pathway is lipid metabolism; fatty acid beta-oxidation. Functionally, catalyzes the final step of fatty acid oxidation in which acetyl-CoA is released and the CoA ester of a fatty acid two carbons shorter is formed. This chain is 3-ketoacyl-CoA thiolase, found in Photorhabdus laumondii subsp. laumondii (strain DSM 15139 / CIP 105565 / TT01) (Photorhabdus luminescens subsp. laumondii).